A 349-amino-acid polypeptide reads, in one-letter code: Protein-glutamate methylesterase/protein-glutamine glutaminase (349 aa).

The region spanning 5-122 (RVLSVDDSAL…REGMLAYSEM (118 aa)) is the Response regulatory domain. A 4-aspartylphosphate modification is found at Asp56. In terms of domain architecture, CheB-type methylesterase spans 152–344 (LLSSEKLIAI…QQMLAKISAG (193 aa)). Catalysis depends on residues Ser164, His190, and Asp286.

Belongs to the CheB family. In terms of processing, phosphorylated by CheA. Phosphorylation of the N-terminal regulatory domain activates the methylesterase activity.

The protein localises to the cytoplasm. It carries out the reaction [protein]-L-glutamate 5-O-methyl ester + H2O = L-glutamyl-[protein] + methanol + H(+). It catalyses the reaction L-glutaminyl-[protein] + H2O = L-glutamyl-[protein] + NH4(+). In terms of biological role, involved in chemotaxis. Part of a chemotaxis signal transduction system that modulates chemotaxis in response to various stimuli. Catalyzes the demethylation of specific methylglutamate residues introduced into the chemoreceptors (methyl-accepting chemotaxis proteins or MCP) by CheR. Also mediates the irreversible deamidation of specific glutamine residues to glutamic acid. The chain is Protein-glutamate methylesterase/protein-glutamine glutaminase from Salmonella typhi.